Consider the following 444-residue polypeptide: Phosphoribosylamine--glycine ligase (444 aa).

An ATP-grasp domain is found at 109 to 324; sequence RNLFKKYEID…FLDVCFAIAE (216 aa). 140–202 is an ATP binding site; the sequence is MTSLGKDVVV…EEKLVGVEFT (63 aa). Gln282, Glu294, and Asn296 together coordinate Mg(2+). Mn(2+) is bound by residues Gln282, Glu294, and Asn296.

It belongs to the GARS family. Requires Mg(2+) as cofactor. The cofactor is Mn(2+).

It carries out the reaction 5-phospho-beta-D-ribosylamine + glycine + ATP = N(1)-(5-phospho-beta-D-ribosyl)glycinamide + ADP + phosphate + H(+). Its pathway is purine metabolism; IMP biosynthesis via de novo pathway; N(1)-(5-phospho-D-ribosyl)glycinamide from 5-phospho-alpha-D-ribose 1-diphosphate: step 2/2. The polypeptide is Phosphoribosylamine--glycine ligase (Methanococcus maripaludis (strain DSM 14266 / JCM 13030 / NBRC 101832 / S2 / LL)).